We begin with the raw amino-acid sequence, 2233 residues long: Acetyl-CoA carboxylase (2233 aa).

Ser2 carries the N-acetylserine modification. Ser2 carries the post-translational modification Phosphoserine. The Biotin carboxylation domain maps to Val58–Thr567. Residues Lys216–Met408 form the ATP-grasp domain. Gly256–Gly261 contacts ATP. Mn(2+)-binding residues include Glu365, Glu379, and Asn381. Arg383 is an active-site residue. Residues Leu694–Thr768 enclose the Biotinyl-binding domain. Lys735 is subject to N6-biotinyllysine. Phosphoserine occurs at positions 790, 1148, 1157, and 1162. Residues Pro1486–Glu1822 form the CoA carboxyltransferase N-terminal domain. Positions Pro1486–His2141 are carboxyltransferase. Residue Ala1627 to Ile1629 coordinates acetyl-CoA. Residue Arg1731 coordinates CoA. A CoA carboxyltransferase C-terminal domain is found at Thr1826–His2141. Gly1998 contacts acetyl-CoA. Residues Lys2034 and Arg2036 each contribute to the CoA site.

In terms of assembly, homodimer. It depends on biotin as a cofactor. Mn(2+) serves as cofactor.

It localises to the cytoplasm. Its subcellular location is the endoplasmic reticulum membrane. The enzyme catalyses hydrogencarbonate + acetyl-CoA + ATP = malonyl-CoA + ADP + phosphate + H(+). It carries out the reaction N(6)-biotinyl-L-lysyl-[protein] + hydrogencarbonate + ATP = N(6)-carboxybiotinyl-L-lysyl-[protein] + ADP + phosphate + H(+). Its pathway is lipid metabolism; malonyl-CoA biosynthesis; malonyl-CoA from acetyl-CoA: step 1/1. By phosphorylation. The catalytic activity is inhibited by soraphen A, a polyketide isolated from the myxobacterium Sorangium cellulosum and a potent inhibitor of fungal growth. Functionally, carries out three functions: biotin carboxyl carrier protein, biotin carboxylase and carboxyltransferase. Involved in the synthesis of very-long-chain fatty acid synthesis which is required to maintain a functional nuclear envelope. Required for acylation and vacuolar membrane association of VAC8 which is necessary to maintain a normal morphology of the vacuole. The protein is Acetyl-CoA carboxylase (ACC1) of Saccharomyces cerevisiae (strain ATCC 204508 / S288c) (Baker's yeast).